A 257-amino-acid chain; its full sequence is Receptor expression-enhancing protein 4 (257 aa).

2 consecutive transmembrane segments (helical) span residues 1–21 and 42–62; these read MVSW…YPAY and WIVF…ISWF. 2 positions are modified to phosphoserine: serine 152 and serine 194. Residues 159 to 257 are disordered; sequence IPDTSAPTYQ…KKTIPSDLDS (99 aa). Threonine 196 bears the Phosphothreonine mark. Serine 202 is modified (phosphoserine). A Phosphothreonine modification is found at threonine 250. Serine 253 bears the Phosphoserine mark.

This sequence belongs to the DP1 family.

It localises to the endoplasmic reticulum membrane. Its function is as follows. Microtubule-binding protein required to ensure proper cell division and nuclear envelope reassembly by sequestering the endoplasmic reticulum away from chromosomes during mitosis. Probably acts by clearing the endoplasmic reticulum membrane from metaphase chromosomes. The sequence is that of Receptor expression-enhancing protein 4 (Reep4) from Rattus norvegicus (Rat).